The chain runs to 331 residues: Beta-ketoacyl-[acyl-carrier-protein] synthase III (331 aa).

Catalysis depends on residues cysteine 116 and histidine 256. Positions 257–261 (QANTR) are ACP-binding. Asparagine 286 is an active-site residue.

Belongs to the thiolase-like superfamily. FabH family. In terms of assembly, homodimer.

It is found in the cytoplasm. It catalyses the reaction malonyl-[ACP] + acetyl-CoA + H(+) = 3-oxobutanoyl-[ACP] + CO2 + CoA. It participates in lipid metabolism; fatty acid biosynthesis. Catalyzes the condensation reaction of fatty acid synthesis by the addition to an acyl acceptor of two carbons from malonyl-ACP. Catalyzes the first condensation reaction which initiates fatty acid synthesis and may therefore play a role in governing the total rate of fatty acid production. Possesses both acetoacetyl-ACP synthase and acetyl transacylase activities. Its substrate specificity determines the biosynthesis of branched-chain and/or straight-chain of fatty acids. The sequence is that of Beta-ketoacyl-[acyl-carrier-protein] synthase III from Caldanaerobacter subterraneus subsp. tengcongensis (strain DSM 15242 / JCM 11007 / NBRC 100824 / MB4) (Thermoanaerobacter tengcongensis).